Here is a 351-residue protein sequence, read N- to C-terminus: CCN family member 3 (351 aa).

The signal sequence occupies residues 1–21 (MSVFLRKQCLCLGFLLLHLLN). An IGFBP N-terminal domain is found at 25–99 (ATLRCPSRCP…NNETGICMVP (75 aa)). Disulfide bonds link C29-C55, C33-C57, C37-C58, C44-C61, C69-C83, and C75-C96. An N-linked (GlcNAc...) asparagine glycan is attached at N91. The VWFC domain maps to 102–168 (DNCVFDGVIY…GECCEKWTCG (67 aa)). The TSP type-1 domain maps to 199–244 (NCIEQTTEWSACSKSCGMGLSTRVTNRNLQCEMVKQTRLCMVRPCE). C238 carries the S-palmitoyl cysteine lipid modification. Cystine bridges form between C258-C295, C275-C309, C286-C325, C289-C327, and C294-C331. A CTCK domain is found at 258–332 (CLRTKKSLKS…GTCTCHSNCP (75 aa)). A glycan (N-linked (GlcNAc...) asparagine) is linked at N274.

This sequence belongs to the CCN family. Interacts with FBLN1. Interacts (via CTCK domain) with NOTCH1 (via the EGF-like repeat region). Interacts with GJA1/CX43. Interacts with ITGA5:ITGB1, ITGAV:ITGB3 and ITGAV:ITGB5. Interacts with ZDHHC22; the interaction may lead to CCN3 palmitoylation. In terms of processing, may be palmitoylated on Cys-238, which is important for extracellular secretion. Widely expressed. Highly expressed in neurons of dorsal root ganglia and dorsal horn of the spinal cord (at protein level). Expressed in astrocytes (at protein level). In cartilage, dominantly expressed in the chondrocyte territorial matrix.

The protein resides in the secreted. The protein localises to the cytoplasm. It localises to the cell junction. It is found in the gap junction. Immediate-early protein playing a role in various cellular processes including proliferation, adhesion, migration, differentiation and survival. Acts by binding to integrins or membrane receptors such as NOTCH1. Essential regulator of hematopoietic stem and progenitor cell function. Inhibits myogenic differentiation through the activation of Notch-signaling pathway. Inhibits vascular smooth muscle cells proliferation by increasing expression of cell-cycle regulators such as CDKN2B or CDKN1A independently of TGFB1 signaling. Ligand of integrins ITGAV:ITGB3 and ITGA5:ITGB1, acts directly upon endothelial cells to stimulate pro-angiogenic activities and induces angiogenesis. In endothelial cells, supports cell adhesion, induces directed cell migration (chemotaxis) and promotes cell survival. Also plays a role in cutaneous wound healing acting as integrin receptor ligand. Supports skin fibroblast adhesion through ITGA5:ITGB1 and ITGA6:ITGB1 and induces fibroblast chemotaxis through ITGAV:ITGB5. Seems to enhance bFGF-induced DNA synthesis in fibroblasts. Involved in bone regeneration as a negative regulator. Enhances the articular chondrocytic phenotype, whereas it repressed the one representing endochondral ossification. Impairs pancreatic beta-cell function, inhibits beta-cell proliferation and insulin secretion. Plays a role as negative regulator of endothelial pro-inflammatory activation reducing monocyte adhesion, its anti-inflammatory effects occur secondary to the inhibition of NF-kappaB signaling pathway. Contributes to the control and coordination of inflammatory processes in atherosclerosis. Attenuates inflammatory pain through regulation of IL1B- and TNF-induced MMP9, MMP2 and CCL2 expression. Inhibits MMP9 expression through ITGB1 engagement. Brain osteoanabolic hormone. During lactation, maintains the maternal skeleton and viability of offspring. The sequence is that of CCN family member 3 (Ccn3) from Rattus norvegicus (Rat).